A 557-amino-acid chain; its full sequence is Dihydroxy-acid dehydratase (557 aa).

Asp-78 contributes to the Mg(2+) binding site. Cys-119 provides a ligand contact to [2Fe-2S] cluster. 2 residues coordinate Mg(2+): Asp-120 and Lys-121. N6-carboxylysine is present on Lys-121. Cys-192 is a [2Fe-2S] cluster binding site. Glu-442 serves as a coordination point for Mg(2+). Ser-468 acts as the Proton acceptor in catalysis.

This sequence belongs to the IlvD/Edd family. Homodimer. Requires [2Fe-2S] cluster as cofactor. It depends on Mg(2+) as a cofactor.

It catalyses the reaction (2R)-2,3-dihydroxy-3-methylbutanoate = 3-methyl-2-oxobutanoate + H2O. The enzyme catalyses (2R,3R)-2,3-dihydroxy-3-methylpentanoate = (S)-3-methyl-2-oxopentanoate + H2O. It functions in the pathway amino-acid biosynthesis; L-isoleucine biosynthesis; L-isoleucine from 2-oxobutanoate: step 3/4. The protein operates within amino-acid biosynthesis; L-valine biosynthesis; L-valine from pyruvate: step 3/4. Its function is as follows. Functions in the biosynthesis of branched-chain amino acids. Catalyzes the dehydration of (2R,3R)-2,3-dihydroxy-3-methylpentanoate (2,3-dihydroxy-3-methylvalerate) into 2-oxo-3-methylpentanoate (2-oxo-3-methylvalerate) and of (2R)-2,3-dihydroxy-3-methylbutanoate (2,3-dihydroxyisovalerate) into 2-oxo-3-methylbutanoate (2-oxoisovalerate), the penultimate precursor to L-isoleucine and L-valine, respectively. The chain is Dihydroxy-acid dehydratase from Bacillus cereus (strain AH820).